We begin with the raw amino-acid sequence, 450 residues long: METLSFDSSALKKFVHPNELGEMQAMVTAADSELRNGTGAGADFRDWLHLPTDYDKDEFARIEAAAKKIQADSEVLVVIGIGGSYLGARMAVDFLHHSFYQAQTAADRKQPLVLFAGNSLSSSYIADLIDVIGDRDFSVNVISKSGTTTEPSIAFRVFRQLLEDKYGVDGANARIYATTDRQRGALKTEADAEGWGTFVIPDGVGGRFSVLTAVGLLPIAVSGADIDQLMAGAAKAEATYVNPDLTQNEAYQYAAYRNILYRKGYTTELLENYEPNMTMLAEWWKQLAGESEGKDQKGIYPSSANFTTDLHSLGQYIQEGRRNLMETVVKLAEPNHNVKVPSAKSDFDGLKYLEGKEIDWVNTQAYRAVVAAHTTGGVPVMTVNIAKEDEFTLGYLIYFFEVAIAISGYLNGINPFNQPGVEAYKTNMFGLLGKPGFEEIGEQLKKEMDD.

Glutamate 290 functions as the Proton donor in the catalytic mechanism. Residues histidine 311 and lysine 425 contribute to the active site.

The protein belongs to the GPI family.

It is found in the cytoplasm. It carries out the reaction alpha-D-glucose 6-phosphate = beta-D-fructose 6-phosphate. Its pathway is carbohydrate biosynthesis; gluconeogenesis. It functions in the pathway carbohydrate degradation; glycolysis; D-glyceraldehyde 3-phosphate and glycerone phosphate from D-glucose: step 2/4. Functionally, catalyzes the reversible isomerization of glucose-6-phosphate to fructose-6-phosphate. This is Glucose-6-phosphate isomerase from Limosilactobacillus fermentum (Lactobacillus fermentum).